A 258-amino-acid chain; its full sequence is MNKLALQGPLWLASDLHLGPATPATAEAFLGLLQAAADEASALLLPGDIFDAWIGDDVIRAAPPWLAAVLQGIRAAAGRIPVYLGRGNRDFLIGQELADALGAHLLPEPVLLETDYGRILLTHGDEYCTDDSAYQQFRAMVRNPQWQAQFLAMSIPERLAMAEQARGESQAANQAKSMEIMDVNPASVEAALREADVDVLVHGHTHRPARHVLSVDGRKRERWVLPDWDCDHADPPRGGWLVIDRDGLQCFDLVEDED.

Mn(2+)-binding residues include aspartate 15, histidine 17, aspartate 48, asparagine 88, and histidine 123. Residue 88–89 coordinates substrate; that stretch reads NR. Residues aspartate 131, serine 169, asparagine 173, lysine 176, and histidine 204 each contribute to the substrate site. Residues histidine 204 and histidine 206 each contribute to the Mn(2+) site.

The protein belongs to the LpxH family. Mn(2+) is required as a cofactor.

It is found in the cell inner membrane. It catalyses the reaction UDP-2-N,3-O-bis[(3R)-3-hydroxytetradecanoyl]-alpha-D-glucosamine + H2O = 2-N,3-O-bis[(3R)-3-hydroxytetradecanoyl]-alpha-D-glucosaminyl 1-phosphate + UMP + 2 H(+). The protein operates within glycolipid biosynthesis; lipid IV(A) biosynthesis; lipid IV(A) from (3R)-3-hydroxytetradecanoyl-[acyl-carrier-protein] and UDP-N-acetyl-alpha-D-glucosamine: step 4/6. In terms of biological role, hydrolyzes the pyrophosphate bond of UDP-2,3-diacylglucosamine to yield 2,3-diacylglucosamine 1-phosphate (lipid X) and UMP by catalyzing the attack of water at the alpha-P atom. Involved in the biosynthesis of lipid A, a phosphorylated glycolipid that anchors the lipopolysaccharide to the outer membrane of the cell. The sequence is that of UDP-2,3-diacylglucosamine hydrolase from Bordetella bronchiseptica (strain ATCC BAA-588 / NCTC 13252 / RB50) (Alcaligenes bronchisepticus).